The following is a 526-amino-acid chain: Peptide chain release factor 3 (526 aa).

Residues 9–277 form the tr-type G domain; that stretch reads NKRRTFAIIS…DFVEYAPGPQ (269 aa). Residues 18–25, 86–90, and 140–143 each bind GTP; these read SHPDAGKT, DTPGH, and NKLD.

Belongs to the TRAFAC class translation factor GTPase superfamily. Classic translation factor GTPase family. PrfC subfamily.

The protein localises to the cytoplasm. Increases the formation of ribosomal termination complexes and stimulates activities of RF-1 and RF-2. It binds guanine nucleotides and has strong preference for UGA stop codons. It may interact directly with the ribosome. The stimulation of RF-1 and RF-2 is significantly reduced by GTP and GDP, but not by GMP. The protein is Peptide chain release factor 3 of Legionella pneumophila (strain Lens).